The sequence spans 1295 residues: Nonribosomal peptide synthetase resC (1295 aa).

A disordered region spans residues 1–24 (MDLTTTSHARVDSGGVPFTSSLND). Residues 221 to 624 (KDVVDASPQA…EGRKDTQIKL (404 aa)) form an adenylation region. The region spanning 759–836 (ESANPAEENL…DQANLLRPLV (78 aa)) is the Carrier domain. The residue at position 796 (S796) is an O-(pantetheine 4'-phosphoryl)serine. The segment at 873–1284 (EDVYPCTPYQ…DEYSQTLHEL (412 aa)) is condensation.

This sequence belongs to the NRP synthetase family. Pantetheine 4'-phosphate serves as cofactor.

The enzyme catalyses restrictinol + glycine + H(+) = restricticin + H2O. The protein operates within antifungal biosynthesis. Nonribosomal peptide synthetase; part of the gene cluster that mediates the biosynthesis of the tetrahydropyranyl antifungal agent restricticin that acts as an inhibitor of CYP51 and blocks the ergosterol biosynthesis. Within the pathway, resC catalyzes the C3 esterification of restrictinol with glycine to yield restricticin. ResC represents an example of the emerging class of single-module NRPS-like enzymes that perform esterification reactions. The highly reducing polyketide synthase resH, the short chain dehydrogenase resG, the cyclase resF, the FAD-dependent monooxygenase resA and the enoylreductase resD are required to generate the first stable intermediate desmethylrestrictinol. ResH with resD biosynthesize the first polyketide chain intermediate that is reduced by resG, followed by epoxidation by resA before 6-endo cyclization via epoxide opening by resF leads to desmethylrestrictinol. The methyltransferase resE then catalyzes the C4 O-methylation of desmethylrestrictinol to produce restrictinol, and the nonribosomal peptide synthetase resC catalyzes the C3 esterification of restrictinol with glycine that leads to restricticin. This chain is Nonribosomal peptide synthetase resC, found in Aspergillus sclerotiorum.